The sequence spans 157 residues: Ribosome maturation factor RimP (157 aa).

This sequence belongs to the RimP family.

It localises to the cytoplasm. Functionally, required for maturation of 30S ribosomal subunits. This is Ribosome maturation factor RimP from Petrotoga mobilis (strain DSM 10674 / SJ95).